The chain runs to 61 residues: Statherin (61 aa).

Residues 1-19 (MXFLXFXLXLLXMXXMXXX) form the signal peptide. Residues 20 to 25 (DSSEEK) are hydroxyapatite-binding; inhibits crystal growth. 2 positions are modified to phosphoserine: serine 21 and serine 22. The segment at 37-61 (RYGPYQPFAPQPLYPQPYQPYQPQY) is disordered. A hydrophobic; inhibits precipitation of calcium phosphate salts region spans residues 37–61 (RYGPYQPFAPQPLYPQPYQPYQPQY). Over residues 43-61 (PFAPQPLYPQPYQPYQPQY) the composition is skewed to pro residues.

This sequence belongs to the histatin/statherin family. As to expression, secreted by parotid and submandibular glands.

Its subcellular location is the secreted. Its function is as follows. Salivary protein that stabilizes saliva supersaturated with calcium salts by inhibiting the precipitation of calcium phosphate salts. It also modulates hydroxyapatite crystal formation on the tooth surface. The sequence is that of Statherin (STATH) from Macaca fascicularis (Crab-eating macaque).